The sequence spans 141 residues: Transcription antitermination protein NusB (141 aa).

The protein belongs to the NusB family.

In terms of biological role, involved in transcription antitermination. Required for transcription of ribosomal RNA (rRNA) genes. Binds specifically to the boxA antiterminator sequence of the ribosomal RNA (rrn) operons. The protein is Transcription antitermination protein NusB of Desulfotalea psychrophila (strain LSv54 / DSM 12343).